The following is a 336-amino-acid chain: Protein-glutamate methylesterase/protein-glutamine glutaminase 1 (336 aa).

A Response regulatory domain is found at 2–119 (KIAIVNDMPL…GNPQEAAAPL (118 aa)). A 4-aspartylphosphate modification is found at Asp53. The 190-residue stretch at 147 to 336 (TASRQRLVAI…APRLLEIFPK (190 aa)) folds into the CheB-type methylesterase domain. Active-site residues include Ser159, His186, and Asp279.

Belongs to the CheB family. In terms of processing, phosphorylated by CheA. Phosphorylation of the N-terminal regulatory domain activates the methylesterase activity.

The protein localises to the cytoplasm. The enzyme catalyses [protein]-L-glutamate 5-O-methyl ester + H2O = L-glutamyl-[protein] + methanol + H(+). The catalysed reaction is L-glutaminyl-[protein] + H2O = L-glutamyl-[protein] + NH4(+). Functionally, involved in chemotaxis. Part of a chemotaxis signal transduction system that modulates chemotaxis in response to various stimuli. Catalyzes the demethylation of specific methylglutamate residues introduced into the chemoreceptors (methyl-accepting chemotaxis proteins or MCP) by CheR. Also mediates the irreversible deamidation of specific glutamine residues to glutamic acid. This chain is Protein-glutamate methylesterase/protein-glutamine glutaminase 1, found in Pseudomonas fluorescens (strain Pf0-1).